The primary structure comprises 440 residues: Protein disulfide-isomerase A6 (440 aa).

The signal sequence occupies residues 1-19 (MALLVLGLVSCTFFLAVNG). 2 consecutive Thioredoxin domains span residues 20-133 (LYSS…ALRQ) and 154-287 (SDSS…EDIA). Active-site nucleophile residues include Cys-55 and Cys-58. An intrachain disulfide couples Cys-55 to Cys-58. A Phosphoserine modification is found at Ser-129. Residues 141-161 (GRSGGYSSGKQGRSDSSSKKD) form a disordered region. Positions 152-161 (GRSDSSSKKD) are enriched in basic and acidic residues. The residue at position 156 (Ser-156) is a Phosphoserine; by FAM20C. Residue Ser-158 is modified to Phosphoserine. Active-site nucleophile residues include Cys-190 and Cys-193. Cys-190 and Cys-193 form a disulfide bridge. At Ser-428 the chain carries Phosphoserine. A Prevents secretion from ER motif is present at residues 437–440 (KDEL).

It belongs to the protein disulfide isomerase family. Part of a large chaperone multiprotein complex comprising DNAJB11, HSP90B1, HSPA5, HYOU, PDIA2, PDIA4, PDIA6, PPIB, SDF2L1, UGGT1 and very small amounts of ERP29, but not, or at very low levels, CALR nor CANX. Interacts with MICA on the surface of tumor cells, leading to MICA disulfide bond reduction which is required for its release from tumor cells. Interacts with ITGB3 following platelet stimulation. Interacts with ERN1; the interaction is direct. Interacts with EIF2AK3. Expressed in platelets (at protein level).

It is found in the endoplasmic reticulum lumen. The protein localises to the cell membrane. It localises to the melanosome. It catalyses the reaction Catalyzes the rearrangement of -S-S- bonds in proteins.. Its function is as follows. May function as a chaperone that inhibits aggregation of misfolded proteins. Negatively regulates the unfolded protein response (UPR) through binding to UPR sensors such as ERN1, which in turn inactivates ERN1 signaling. May also regulate the UPR via the EIF2AK3 UPR sensor. Plays a role in platelet aggregation and activation by agonists such as convulxin, collagen and thrombin. This Homo sapiens (Human) protein is Protein disulfide-isomerase A6 (PDIA6).